We begin with the raw amino-acid sequence, 1567 residues long: Putative DEAH-box ATP-dependent helicase UM11114 (1567 aa).

2 disordered regions span residues 1–95 (MAPR…PGSK) and 670–734 (ESSV…ETRR). The segment covering 10–20 (IKSSGTTSSKA) has biased composition (polar residues). Composition is skewed to low complexity over residues 39–48 (TKAAKQQQTQ) and 55–73 (AISA…AASS). A compositionally biased stretch (gly residues) spans 74–83 (AGGGGGGGQG). Composition is skewed to polar residues over residues 670–687 (ESSV…TPTG) and 713–726 (LQRQ…SPSY). Residues 746–924 (LGLIRSNRVV…FGKAPCISIP (179 aa)) enclose the Helicase ATP-binding domain. ATP is bound at residue 759-766 (GETGCGKT). A DEAH box motif is present at residues 871 to 874 (DEVH). The Helicase C-terminal domain occupies 1003 to 1184 (VVRYVVERAE…SLFLEVKSMR (182 aa)).

The protein belongs to the DEAD box helicase family. DEAH subfamily.

This chain is Putative DEAH-box ATP-dependent helicase UM11114, found in Mycosarcoma maydis (Corn smut fungus).